A 44-amino-acid chain; its full sequence is Putative protein PsbN (44 aa).

A helical membrane pass occupies residues 3–23 (IISFLSTIFLGFFIISTTIYS).

Belongs to the PsbN family.

It is found in the plastid. The protein resides in the chloroplast thylakoid membrane. In terms of biological role, may play a role in photosystem I and II biogenesis. This is Putative protein PsbN from Euglena gracilis.